A 654-amino-acid polypeptide reads, in one-letter code: APC membrane recruitment protein 2 (654 aa).

4 disordered regions span residues 1–105 (MEVQ…TAPL), 224–289 (ECGN…QSEQ), 316–369 (IIAD…PQVS), and 381–654 (PAHQ…QSRK). Over residues 9-18 (EPPPCDPQPP) the composition is skewed to pro residues. A compositionally biased stretch (basic and acidic residues) spans 60 to 70 (ELVRSKTHDGL). A compositionally biased stretch (basic and acidic residues) spans 427 to 454 (PQKDEDSPAPRRAEPVLHHAPARLEKRP). Polar residues predominate over residues 468 to 479 (SGSSKTGKQQPS). Residues 565–575 (SPKCSSSATSS) are compositionally biased toward low complexity. Polar residues predominate over residues 576–586 (FRSMKGSTSLP). Residues 601–621 (SHSSSQGALSSNLSPTSTTPP) show a composition bias toward low complexity. Residues 644–654 (GKSTSTSQSRK) show a composition bias toward polar residues.

This sequence belongs to the Amer family.

Its subcellular location is the cell membrane. In terms of biological role, negative regulator of the canonical Wnt signaling pathway involved in neuroectodermal patterning. Acts by specifically binding phosphatidylinositol 4,5-bisphosphate (PtdIns(4,5)P2), translocating to the cell membrane and interacting with key regulators of the canonical Wnt signaling pathway, such as components of the beta-catenin destruction complex. This Danio rerio (Zebrafish) protein is APC membrane recruitment protein 2 (amer2).